We begin with the raw amino-acid sequence, 376 residues long: Queuine tRNA-ribosyltransferase accessory subunit 2 (376 aa).

4 residues coordinate Zn(2+): Cys323, Cys325, Cys328, and His354.

This sequence belongs to the queuine tRNA-ribosyltransferase family. QTRT2 subfamily. As to quaternary structure, heterodimer of a catalytic subunit and an accessory subunit. Requires Zn(2+) as cofactor.

It is found in the cytoplasm. Its function is as follows. Non-catalytic subunit of the queuine tRNA-ribosyltransferase (TGT) that catalyzes the base-exchange of a guanine (G) residue with queuine (Q) at position 34 (anticodon wobble position) in tRNAs with GU(N) anticodons (tRNA-Asp, -Asn, -His and -Tyr), resulting in the hypermodified nucleoside queuosine (7-(((4,5-cis-dihydroxy-2-cyclopenten-1-yl)amino)methyl)-7-deazaguanosine). The sequence is that of Queuine tRNA-ribosyltransferase accessory subunit 2 from Caenorhabditis briggsae.